The sequence spans 546 residues: Glutathione reductase (546 aa).

The transit peptide at Tyr2–Asn46 directs the protein to the apicoplast. The FAD site is built by Ser58 and Gly59. Residue Ser58 coordinates glutathione. Arg65 provides a ligand contact to glutathione. 4 residues coordinate FAD: Glu78, Thr85, Cys86, and Lys94. Cys86 and Cys91 form a disulfide bridge. Glutathione is bound at residue Tyr141. FAD is bound at residue Ala157. The NADP(+) site is built by Ile233, Glu236, Arg253, Arg259, and Gly318. FAD-binding residues include Asp358 and Thr400. Residue Arg408 participates in glutathione binding. Residue Val430 coordinates NADP(+). Residue His531 participates in FAD binding. The Proton acceptor role is filled by His531.

The protein belongs to the class-I pyridine nucleotide-disulfide oxidoreductase family. As to quaternary structure, homodimer. It depends on FAD as a cofactor.

The protein localises to the cytoplasm. Its subcellular location is the plastid. It is found in the apicoplast. The enzyme catalyses 2 glutathione + NADP(+) = glutathione disulfide + NADPH + H(+). Functionally, catalyzes the reduction of glutathione disulfide (GSSG) to reduced glutathione (GSH). Constitutes the major mechanism to maintain a high GSH:GSSG ratio in the cytosol. In Plasmodium falciparum (isolate 3D7), this protein is Glutathione reductase.